The following is a 315-amino-acid chain: tRNA uridine(34) hydroxylase (315 aa).

One can recognise a Rhodanese domain in the interval 136 to 230; sequence SDPETLVIDT…YLEEIPPEES (95 aa). The Cysteine persulfide intermediate role is filled by Cys-190.

It belongs to the TrhO family.

It carries out the reaction uridine(34) in tRNA + AH2 + O2 = 5-hydroxyuridine(34) in tRNA + A + H2O. In terms of biological role, catalyzes oxygen-dependent 5-hydroxyuridine (ho5U) modification at position 34 in tRNAs. This Sinorhizobium medicae (strain WSM419) (Ensifer medicae) protein is tRNA uridine(34) hydroxylase.